Consider the following 153-residue polypeptide: Ribonuclease HI (153 aa).

One can recognise an RNase H type-1 domain in the interval 1–141; that stretch reads MKSVNIFTDG…CDELAKLGAN (141 aa). The Mg(2+) site is built by D9, E47, D69, and D133.

It belongs to the RNase H family. As to quaternary structure, monomer. Mg(2+) is required as a cofactor.

Its subcellular location is the cytoplasm. The enzyme catalyses Endonucleolytic cleavage to 5'-phosphomonoester.. Functionally, endonuclease that specifically degrades the RNA of RNA-DNA hybrids. This Haemophilus ducreyi (strain 35000HP / ATCC 700724) protein is Ribonuclease HI.